Reading from the N-terminus, the 245-residue chain is 8-amino-3,8-dideoxy-manno-octulosonate cytidylyltransferase (245 aa).

Belongs to the KdsB family.

It is found in the cytoplasm. The catalysed reaction is 8-amino-3,8-dideoxy-alpha-D-manno-octulosonate + CTP = CMP-8-amino-3,8-dideoxy-alpha-D-manno-oct-2-ulosonate + diphosphate. Its pathway is bacterial outer membrane biogenesis; lipopolysaccharide biosynthesis. Activates KDO8N (a required 8-carbon sugar) for incorporation into bacterial lipopolysaccharide in the Shewanella genus. This chain is 8-amino-3,8-dideoxy-manno-octulosonate cytidylyltransferase, found in Shewanella sp. (strain MR-7).